The primary structure comprises 186 residues: Nuclear transcription factor Y subunit B-1 (186 aa).

The interval 1-24 (MAGNKKRGGRNMDQVKKAAVRSDG) is disordered. The DNA-binding element occupies 34-40 (LPMANLV). Residues 61 to 72 (THDCAVEFVGFV) are subunit association domain (SAD). The segment at 123–142 (GGNRRVAPPPPAAATPLTPG) is disordered.

It belongs to the NFYB/HAP3 subunit family. As to quaternary structure, heterotrimeric transcription factor composed of three components, NF-YA, NF-YB and NF-YC. NF-YB and NF-YC must interact and dimerize for NF-YA association and DNA binding. Interacts with MADS18. Forms a ternary complex with the MADS6-MADS18 heterodimer. As to expression, expressed in developing kernels.

It localises to the nucleus. Its function is as follows. Component of the NF-Y/HAP transcription factor complex. The NF-Y complex stimulates the transcription of various genes by recognizing and binding to a CCAAT motif in promoters. May act through association with MADS-box proteins. May regulate the expression of genes involved in flowering. This chain is Nuclear transcription factor Y subunit B-1 (NFYB1), found in Oryza sativa subsp. japonica (Rice).